Consider the following 672-residue polypeptide: DNA polymerase eta (672 aa).

Residues 14–254 (IAHVDMDCFY…LPIKKMKQLG (241 aa)) enclose the UmuC domain. The Mg(2+) site is built by D18 and M19. The Mn(2+) site is built by D18 and M19. 2 residues coordinate a 2'-deoxyribonucleoside 5'-triphosphate: Y23 and R60. 2 residues coordinate Mg(2+): D120 and E121. 2 residues coordinate Mn(2+): D120 and E121. The active-site Proton acceptor is E121. DNA-binding regions lie at residues 318–325 (KTFPGPRA) and 362–383 (TLHASAFRSKDSDSHKKFPSKS). Disordered stretches follow at residues 521-617 (VSCP…TDWG) and 648-672 (QFNTGKSKGDGSTSSIAHYFPPLNR). 2 stretches are compositionally biased toward polar residues: residues 523–544 (CPSNEATDVSTQSESNKGTQTK) and 570–586 (YNATPPSKQETQEDSTV). 2 stretches are compositionally biased toward low complexity: residues 587–602 (SSASKRAKLSSSSHNS) and 651–662 (TGKSKGDGSTSS).

This sequence belongs to the DNA polymerase type-Y family. As to quaternary structure, interacts with PCNA1 and PCNA2. The interaction with PCNA2 is required for translesion synthesis (TLS) to repair UV photoproducts. Mg(2+) is required as a cofactor. The cofactor is Mn(2+). In terms of tissue distribution, constitutively expressed in roots, stems, leaves, flowers and siliques.

Its subcellular location is the nucleus. The catalysed reaction is DNA(n) + a 2'-deoxyribonucleoside 5'-triphosphate = DNA(n+1) + diphosphate. With respect to regulation, the enzyme in complex with the DNA substrate binds a third divalent metal cation. The binding of this third divalent cation, which is coordinated by water molecules and two oxygen atoms from DNA and dNTP, is essential for catalyzing the DNA synthesis. Its function is as follows. Error-free DNA polymerase specifically involved in DNA repair. Plays an important role in translesion synthesis (TLS), where the normal high fidelity DNA polymerases cannot proceed and DNA synthesis stalls. Plays an important role in the repair of UV-induced pyrimidine dimers and confers resistance to ultraviolet light. Depending on the context, it inserts the correct base, but may cause base transitions and transversions. Forms a Schiff base with 5'-deoxyribose phosphate at abasic sites, but does not have lyase activity. Targets POLI to replication foci. Exhibits cyclobutane dimer nonmutagenic bypass activity in vitro. The chain is DNA polymerase eta (POLH) from Arabidopsis thaliana (Mouse-ear cress).